Consider the following 1389-residue polypeptide: Carboxypeptidase D (1389 aa).

Positions 1–25 (MAGAARGLLWAALSLCLLPEPLRAA) are cleaved as a signal peptide. The Extracellular segment spans residues 26 to 1308 (HIKKAEAAAA…ENRIFGLPRE (1283 aa)). The Peptidase M14 1 domain maps to 46–383 (RYLHAAELGQ…ESLLTFIEKV (338 aa)). The disordered stretch occupies residues 95–133 (LPEARQDGEKKKKEEEEEEEEEEGEEGGGGALPGRPQVK). A compositionally biased stretch (basic and acidic residues) spans 96–108 (PEARQDGEKKKKE). The span at 109–120 (EEEEEEEEEGEE) shows a compositional bias: acidic residues. Zn(2+) is bound by residues histidine 139 and glutamate 142. Residue asparagine 172 is glycosylated (N-linked (GlcNAc...) asparagine). The interval 188 to 235 (ERAREGDCGGGGGGGGEGGGEPGGRENSRGRDLNRSFPDQFGSAQPDL) is disordered. The segment covering 195–209 (CGGGGGGGGEGGGEP) has biased composition (gly residues). Residues 210–221 (GGRENSRGRDLN) are compositionally biased toward basic and acidic residues. N-linked (GlcNAc...) asparagine glycosylation is present at asparagine 221. Histidine 260 contributes to the Zn(2+) binding site. The active-site Proton donor/acceptor is the glutamate 353. N-linked (GlcNAc...) asparagine glycosylation is found at asparagine 402, asparagine 413, asparagine 432, and asparagine 472. The Peptidase M14 2 domain maps to 511-801 (RHHHFSDMEI…RSLLQFIKQV (291 aa)). Zn(2+)-binding residues include histidine 573 and glutamate 576. Positions 614–639 (SMNPDGYEKSQEGDRGGTVGRNNSNN) are disordered. Residues 619–628 (GYEKSQEGDR) show a composition bias toward basic and acidic residues. Asparagine 635 carries N-linked (GlcNAc...) asparagine glycosylation. Histidine 680 is a binding site for Zn(2+). Residue glutamate 771 is the Proton donor/acceptor of the active site. N-linked (GlcNAc...) asparagine glycans are attached at residues asparagine 820, asparagine 876, asparagine 958, asparagine 981, asparagine 1073, and asparagine 1151. The Peptidase M14 3 domain maps to 935 to 1220 (RYRPYKDLSE…KSLLSMLVEV (286 aa)). Residues 1309-1329 (LVVTVAGASMSALVLTACIIW) form a helical membrane-spanning segment. Residues cysteine 1326, cysteine 1330, and cysteine 1332 are each lipidated (S-palmitoyl cysteine). At 1330-1389 (CVCSIKSNRHKDGFPTLRQHHDDYEDEIRMMSTGSKKSLLSHEFQDETDTEEETLYSSKH) the chain is on the cytoplasmic side. A disordered region spans residues 1367 to 1389 (SLLSHEFQDETDTEEETLYSSKH).

Belongs to the peptidase M14 family. As to quaternary structure, binds to pre-S, hepatitis B virus large envelope protein, via the carboxypeptidase-like domain. Requires Zn(2+) as cofactor. The N-terminus is blocked. As to expression, expressed in liver, lung, kidney, heart, stomach, pancreas, spleen, gall bladder and intestine, but not in skeletal muscle.

The protein resides in the cell membrane. It catalyses the reaction Releases C-terminal Arg and Lys from polypeptides.. In Anas platyrhynchos (Mallard), this protein is Carboxypeptidase D (CPD).